We begin with the raw amino-acid sequence, 482 residues long: MPTVSVKWQKKVLDGIEIDVSLPPYVFKAQLYDLTGVPPERQKIMVKGGLLKDDGDWAAIGVKDGQKLMMMGTADEIVKAPEKAIVFAEDLPEEALATNLGYSAGLVNLGNTCYMNSTVQCLKSVPELKSALSNYSLAARSNDVDQTSHMLTVATRELFGELDRSVNAVSPSQFWMVLRKKYPQFSQLQNGMHMQQDAEECWTQLLYTLSQSLKAPTSSEGADAVKALFGVNLQSRLHCQESGEESSETESVYSLKCHISHEVNHLHEGLKHGLKGELEKTSPALGRTALYVKESLIDSLPRYLTVQFVRFFWKRESNQKAKILRKVDYPLVLDIFDLCSEDLRKKLEAPRQKLREEEGKKLGLQTSAKSGSKDSDVKMTDAEASANGSGESSTVNPQEGTSSEKETHMTGIYDLVAVLTHKGRSADSGHYVAWVKQESGKWIQYDDDNPSMQREEDITKLSGGGDWHMAYITMYKARFVSM.

The 76-residue stretch at 2–77 (PTVSVKWQKK…LMMMGTADEI (76 aa)) folds into the Ubiquitin-like domain. The USP domain maps to 104–478 (AGLVNLGNTC…MAYITMYKAR (375 aa)). The Nucleophile role is filled by Cys113. Positions 172–191 (SQFWMVLRKKYPQFSQLQNG) are calmodulin-binding. Composition is skewed to basic and acidic residues over residues 350–361 (PRQKLREEEGKK) and 371–381 (GSKDSDVKMTD). The disordered stretch occupies residues 350-407 (PRQKLREEEGKKLGLQTSAKSGSKDSDVKMTDAEASANGSGESSTVNPQEGTSSEKET). A compositionally biased stretch (low complexity) spans 382–393 (AEASANGSGESS). His430 functions as the Proton acceptor in the catalytic mechanism.

It belongs to the peptidase C19 family. In terms of assembly, interacts with calmodulin (CaM).

It catalyses the reaction Thiol-dependent hydrolysis of ester, thioester, amide, peptide and isopeptide bonds formed by the C-terminal Gly of ubiquitin (a 76-residue protein attached to proteins as an intracellular targeting signal).. In terms of biological role, recognizes and hydrolyzes the peptide bond at the C-terminal Gly of ubiquitin. Involved in the processing of poly-ubiquitin precursors as well as that of ubiquitinated proteins. The protein is Ubiquitin carboxyl-terminal hydrolase 6 (UBP6) of Arabidopsis thaliana (Mouse-ear cress).